Reading from the N-terminus, the 307-residue chain is D-alanine--D-alanine ligase (307 aa).

Positions 108 to 301 (KEVFAAAGLP…FPEFCAWLVE (194 aa)) constitute an ATP-grasp domain. Residue 135-185 (LPPPYVVKPNAEGSSVGVYIVHEDANGPPQLAADMPQDLMVETYVPGRELT) participates in ATP binding. Residues Asp-252, Glu-268, and Asn-270 each contribute to the Mg(2+) site.

It belongs to the D-alanine--D-alanine ligase family. Requires Mg(2+) as cofactor. It depends on Mn(2+) as a cofactor.

It is found in the cytoplasm. It carries out the reaction 2 D-alanine + ATP = D-alanyl-D-alanine + ADP + phosphate + H(+). It functions in the pathway cell wall biogenesis; peptidoglycan biosynthesis. Its function is as follows. Cell wall formation. The sequence is that of D-alanine--D-alanine ligase from Cereibacter sphaeroides (strain ATCC 17029 / ATH 2.4.9) (Rhodobacter sphaeroides).